The sequence spans 508 residues: ATP synthase subunit alpha (508 aa).

Residue 169–176 (GDRGTGKS) participates in ATP binding.

This sequence belongs to the ATPase alpha/beta chains family. As to quaternary structure, F-type ATPases have 2 components, CF(1) - the catalytic core - and CF(0) - the membrane proton channel. CF(1) has five subunits: alpha(3), beta(3), gamma(1), delta(1), epsilon(1). CF(0) has three main subunits: a(1), b(2) and c(9-12). The alpha and beta chains form an alternating ring which encloses part of the gamma chain. CF(1) is attached to CF(0) by a central stalk formed by the gamma and epsilon chains, while a peripheral stalk is formed by the delta and b chains.

The protein localises to the cell membrane. The catalysed reaction is ATP + H2O + 4 H(+)(in) = ADP + phosphate + 5 H(+)(out). Its function is as follows. Produces ATP from ADP in the presence of a proton gradient across the membrane. The alpha chain is a regulatory subunit. This Natranaerobius thermophilus (strain ATCC BAA-1301 / DSM 18059 / JW/NM-WN-LF) protein is ATP synthase subunit alpha.